The sequence spans 203 residues: Urease accessory protein UreG (203 aa).

Residue 10-17 participates in GTP binding; that stretch reads GPVGAGKT.

It belongs to the SIMIBI class G3E GTPase family. UreG subfamily. As to quaternary structure, homodimer. UreD, UreF and UreG form a complex that acts as a GTP-hydrolysis-dependent molecular chaperone, activating the urease apoprotein by helping to assemble the nickel containing metallocenter of UreC. The UreE protein probably delivers the nickel.

The protein resides in the cytoplasm. Functionally, facilitates the functional incorporation of the urease nickel metallocenter. This process requires GTP hydrolysis, probably effectuated by UreG. The protein is Urease accessory protein UreG of Lachnoclostridium phytofermentans (strain ATCC 700394 / DSM 18823 / ISDg) (Clostridium phytofermentans).